The following is a 185-amino-acid chain: Ribosome-recycling factor (185 aa).

The protein belongs to the RRF family.

It is found in the cytoplasm. Responsible for the release of ribosomes from messenger RNA at the termination of protein biosynthesis. May increase the efficiency of translation by recycling ribosomes from one round of translation to another. The protein is Ribosome-recycling factor of Aeromonas hydrophila subsp. hydrophila (strain ATCC 7966 / DSM 30187 / BCRC 13018 / CCUG 14551 / JCM 1027 / KCTC 2358 / NCIMB 9240 / NCTC 8049).